Here is a 294-residue protein sequence, read N- to C-terminus: Acetylglutamate kinase (294 aa).

Substrate-binding positions include 69–70 (GG), R91, and N190.

Belongs to the acetylglutamate kinase family. ArgB subfamily.

It localises to the cytoplasm. It catalyses the reaction N-acetyl-L-glutamate + ATP = N-acetyl-L-glutamyl 5-phosphate + ADP. It functions in the pathway amino-acid biosynthesis; L-arginine biosynthesis; N(2)-acetyl-L-ornithine from L-glutamate: step 2/4. Its function is as follows. Catalyzes the ATP-dependent phosphorylation of N-acetyl-L-glutamate. The sequence is that of Acetylglutamate kinase from Mycobacterium bovis (strain ATCC BAA-935 / AF2122/97).